We begin with the raw amino-acid sequence, 1575 residues long: Laminin subunit gamma-3 (1575 aa).

Residues 1-19 form the signal peptide; that stretch reads MAAAALLLGLALLAPRAAG. The Laminin N-terminal domain occupies 31–270; sequence RPQRCLPVFE…AVSDFSVGGR (240 aa). N-linked (GlcNAc...) asparagine glycosylation is found at Asn-87 and Asn-119. Cystine bridges form between Cys-271/Cys-280, Cys-273/Cys-290, Cys-292/Cys-301, Cys-304/Cys-324, Cys-327/Cys-336, Cys-329/Cys-352, Cys-355/Cys-364, Cys-367/Cys-380, Cys-383/Cys-395, Cys-385/Cys-401, Cys-403/Cys-412, Cys-415/Cys-427, Cys-430/Cys-441, Cys-432/Cys-448, Cys-450/Cys-459, and Cys-462/Cys-477. 4 Laminin EGF-like domains span residues 271–326, 327–382, 383–429, and 430–479; these read CKCN…ECLP, CNCS…PCQP, CDCQ…GCRP, and CTCN…GCSS. Asn-295 is a glycosylation site (N-linked (GlcNAc...) asparagine). Asn-328 is a glycosylation site (N-linked (GlcNAc...) asparagine). The Laminin EGF-like 5; first part domain maps to 480–489; it reads CFCYGHSKVC. Residues 499 to 672 form the Laminin IV type A domain; sequence HILSDFHQGA…LSPPASWVEI (174 aa). An N-linked (GlcNAc...) asparagine glycan is attached at Asn-631. The 34-residue stretch at 673–706 folds into the Laminin EGF-like 5; second part domain; the sequence is CSCPTGYTGQFCESCAPGYKREMPQGGPYASCVP. Intrachain disulfides connect Cys-707-Cys-715, Cys-709-Cys-722, Cys-724-Cys-733, Cys-736-Cys-752, Cys-755-Cys-763, Cys-757-Cys-774, Cys-777-Cys-786, Cys-789-Cys-807, Cys-810-Cys-824, Cys-812-Cys-831, Cys-834-Cys-843, Cys-846-Cys-863, Cys-866-Cys-880, Cys-868-Cys-887, Cys-889-Cys-898, Cys-901-Cys-914, Cys-917-Cys-929, Cys-919-Cys-936, Cys-938-Cys-947, Cys-950-Cys-962, Cys-965-Cys-977, Cys-967-Cys-983, Cys-985-Cys-994, and Cys-997-Cys-1010. Laminin EGF-like domains follow at residues 707–754, 755–809, 810–865, 866–916, 917–964, and 965–1013; these read CTCN…DCQP, CPCP…PCHQ, CQCS…KCMP, CSCH…GCRS, CKCH…GCRA, and CRCS…CQQC. Asn-837 carries an N-linked (GlcNAc...) asparagine glycan. Asn-980 carries N-linked (GlcNAc...) asparagine glycosylation. Positions 1014-1575 are domain II and I; sequence PSCYALVKEE…SLPENCASWQ (562 aa). The Cell attachment site signature appears at 1059 to 1061; it reads RGD. Residues 1073 to 1134 adopt a coiled-coil conformation; the sequence is REAFLEQMMS…SEEEILHAAA (62 aa). A glycan (N-linked (GlcNAc...) asparagine) is linked at Asn-1185. A coiled-coil region spans residues 1201–1228; the sequence is LETQRDLEDRYQEVQAAQKALRTAVAEV. Positions 1378-1399 are disordered; it reads KQAERMLGNAAPLSSSAKKKGR. Coiled-coil stretches lie at residues 1410-1492 and 1523-1567; these read KLAK…LARL and GSLQ…LHSL.

As to quaternary structure, laminin is a complex glycoprotein, consisting of three different polypeptide chains (alpha, beta, gamma), which are bound to each other by disulfide bonds into a cross-shaped molecule comprising one long and three short arms with globules at each end. Gamma-3 is a subunit of laminin-12 (laminin-213), laminin-14 (laminin-423) and laminin-15 (laminin-523). Broadly expressed in: skin, heart, lung, and the reproductive tracts.

It is found in the secreted. Its subcellular location is the extracellular space. The protein resides in the extracellular matrix. The protein localises to the basement membrane. Binding to cells via a high affinity receptor, laminin is thought to mediate the attachment, migration and organization of cells into tissues during embryonic development by interacting with other extracellular matrix components. This chain is Laminin subunit gamma-3 (LAMC3), found in Homo sapiens (Human).